A 266-amino-acid chain; its full sequence is Undecaprenyl-diphosphatase (266 aa).

The next 8 helical transmembrane spans lie at 1–21, 39–59, 87–107, 111–131, 149–169, 183–203, 218–238, and 246–266; these read METF…FLPI, QGFS…VIYF, WWII…KDFI, LRNT…LWWA, ALLI…RSGA, AAAK…AILV, ALGI…YYFL, and MTPF…LILW.

It belongs to the UppP family.

The protein resides in the cell inner membrane. The catalysed reaction is di-trans,octa-cis-undecaprenyl diphosphate + H2O = di-trans,octa-cis-undecaprenyl phosphate + phosphate + H(+). In terms of biological role, catalyzes the dephosphorylation of undecaprenyl diphosphate (UPP). Confers resistance to bacitracin. In Shewanella denitrificans (strain OS217 / ATCC BAA-1090 / DSM 15013), this protein is Undecaprenyl-diphosphatase.